Consider the following 182-residue polypeptide: UPF0397 protein BCAH820_2657 (182 aa).

Transmembrane regions (helical) follow at residues 9-29 (VVAIGIGSALYGILGLWGFTI), 40-60 (AILTVFGALFGPVAGLLIGLI), 71-91 (WGIWWGWVISSGIIGFTMGFI), 114-134 (ITGLIGIVIAIIFAGAFDIIV), and 142-162 (IVIQVLGATIADVIVFLVLGL).

Belongs to the UPF0397 family.

The protein localises to the cell membrane. This Bacillus cereus (strain AH820) protein is UPF0397 protein BCAH820_2657.